Consider the following 319-residue polypeptide: tRNA uridine(34) hydroxylase (319 aa).

The Rhodanese domain maps to 127–221 (KQEDTVIIDA…YGKDPEVQGE (95 aa)). C181 serves as the catalytic Cysteine persulfide intermediate.

It belongs to the TrhO family.

The enzyme catalyses uridine(34) in tRNA + AH2 + O2 = 5-hydroxyuridine(34) in tRNA + A + H2O. In terms of biological role, catalyzes oxygen-dependent 5-hydroxyuridine (ho5U) modification at position 34 in tRNAs. The chain is tRNA uridine(34) hydroxylase from Bacillus thuringiensis (strain Al Hakam).